The chain runs to 868 residues: MRNAGVQVDTNMQKISLQDTVLVNEMKGRVKFIGETQFAKGIWYGIELDKPLGKNDGSANGIRYFDIDLKKANSNGGYYGLFCKKDTLQFYKPDDDEHSLLNGNAAQETIKNLQVKCESLASKLNKIKIENHELKTSVEKLSTNETVLLSKISRLDKLVKELKVENGNMKTHLDNFNHLLDASDSVMAPDLDKGTLLERSHLLQGLLDQTKLSYDKAMKVQEDLLEENTQLLEENAVLSKKISDLGLQLQQTNNTIGDLALQIEAQSKSSNIVDKLTNDNILLTSNIKALNNELEELQAKEKLDENLRITYEQLEQELRLQLSNLQSALENEKEIAGTYIEENSRLKATLESIEAKTSHKFQSLELKVNTLQEELYQNKLLKKFYQIYEPFAQPHLAALSSQLQYLAEVIESENFGKLENIEIHIILKVLSSISYALHIYTIKNTPDHLETTLQCFKVNIAPISMWLSEFLQRKFSSKQETAFSICQFLEDNKFLDKDVTLILKILHPILETTVPKLLAFLRTNSNFNDNDTLCLIGSLYERSLSLIARIDKLIGKEEISKQDNRLFLYPSCDITLSSILTILFSDALFLRQDYKRISSLKKLEVFFQGIESLLENITIFPEQPSQQTSDSESQCNIKEGNFSNSLLSDRLNEENIRLKEVLVQKENMLTELETKIKIIIGRDLERKTLEENIKTLKVELNNKNEENCGKTEILNKLKEENFNLVNRLKNMELKLYQIKDNNTLNKIYLDREKVDRVNLVSEIMELRETIRRQIKEQKRVSIDFSWLDELPAVENKQPFKEHINHSLDTLGIEMFNFVSTSRILDLKLDQPLAEDELWHERDHSYISYLKRKRKNIRLKSQNVVTYYK.

Positions G34–K84 constitute a CAP-Gly domain. Coiled coils occupy residues L101–N175, L207–L375, and S645–E776.

Component of the dynactin complex composed of at least ARP1, JNM1, NIP100 and ARP10. Dynactin comprises a short rod of the ARP1 filament attached to ARP10 at its pointed-end and probably associated with the capping protein at its barbed-end. The rod is implicated in dynein cargo binding. A sidearm formed by NIP100 projects from the ARP1 filament and is implicated in motor binding.

The protein localises to the cytoplasm. It localises to the cytoskeleton. Its subcellular location is the spindle pole. Motor-binding component of the dynactin complex which assists cytoplasmic dynein by increasing its processivity and by regulation of its cargo binding. The dynactin complex is required for the spindle translocation late in anaphase and is involved in a cell wall synthesis checkpoint. The polypeptide is Protein NIP100 (NIP100) (Saccharomyces cerevisiae (strain ATCC 204508 / S288c) (Baker's yeast)).